The sequence spans 294 residues: Ribosomal RNA small subunit methyltransferase I (294 aa).

It belongs to the methyltransferase superfamily. RsmI family.

Its subcellular location is the cytoplasm. It carries out the reaction cytidine(1402) in 16S rRNA + S-adenosyl-L-methionine = 2'-O-methylcytidine(1402) in 16S rRNA + S-adenosyl-L-homocysteine + H(+). Its function is as follows. Catalyzes the 2'-O-methylation of the ribose of cytidine 1402 (C1402) in 16S rRNA. The protein is Ribosomal RNA small subunit methyltransferase I of Mesorhizobium japonicum (strain LMG 29417 / CECT 9101 / MAFF 303099) (Mesorhizobium loti (strain MAFF 303099)).